The following is a 670-amino-acid chain: Solute carrier organic anion transporter family member 1A5 (670 aa).

Residues Met-1–Lys-20 lie on the Cytoplasmic side of the membrane. Residues Met-21 to Met-40 traverse the membrane as a helical segment. Topologically, residues Asn-41–Gly-59 are extracellular. A helical membrane pass occupies residues Leu-60–Gly-80. Residues Thr-81–Pro-86 lie on the Cytoplasmic side of the membrane. The chain crosses the membrane as a helical span at residues Ile-87–Gly-111. Topologically, residues Arg-112–Ser-155 are extracellular. Residues Asn-124 and Asn-135 are each glycosylated (N-linked (GlcNAc...) asparagine). Residues Leu-156 to Glu-184 form a helical membrane-spanning segment. The Cytoplasmic segment spans residues Asp-185 to Lys-203. A helical membrane pass occupies residues Met-204–Thr-224. Over Gly-225–Val-242 the chain is Extracellular. Residues Gly-243 to Pro-267 form a helical membrane-spanning segment. Residues Lys-268–Ser-311 lie on the Cytoplasmic side of the membrane. Residues Leu-312 to Ile-333 traverse the membrane as a helical segment. The Extracellular segment spans residues Asn-334 to Glu-353. A helical transmembrane segment spans residues Val-354–Met-377. At Lys-378–Arg-381 the chain is on the cytoplasmic side. A helical membrane pass occupies residues Ile-382–His-405. Residues Phe-406–Phe-513 lie on the Extracellular side of the membrane. The Kazal-like domain occupies Asn-433–Gln-488. Intrachain disulfides connect Cys-439/Cys-469, Cys-445/Cys-465, and Cys-454/Cys-486. Residues Asn-483 and Asn-492 are each glycosylated (N-linked (GlcNAc...) asparagine). A helical membrane pass occupies residues Leu-514–Leu-536. Residues Arg-537–Ser-545 are Cytoplasmic-facing. Residues Leu-546–Ile-571 traverse the membrane as a helical segment. At Asp-572–Pro-605 the chain is on the extracellular side. The helical transmembrane segment at Ala-606–Met-623 threads the bilayer. Over Arg-624–Leu-670 the chain is Cytoplasmic.

This sequence belongs to the organo anion transporter (TC 2.A.60) family. As to expression, expressed in brain, choroid plexus and lung, but not in liver or kidney.

The protein localises to the cell membrane. It localises to the basal cell membrane. The enzyme catalyses taurocholate(out) = taurocholate(in). The catalysed reaction is glycocholate(out) = glycocholate(in). It carries out the reaction taurochenodeoxycholate(out) = taurochenodeoxycholate(in). It catalyses the reaction tauroursodeoxycholate(out) = tauroursodeoxycholate(in). The enzyme catalyses 3,3',5'-triiodo-L-thyronine(out) = 3,3',5'-triiodo-L-thyronine(in). The catalysed reaction is L-thyroxine(out) = L-thyroxine(in). It carries out the reaction taurodeoxycholate(out) = taurodeoxycholate(in). It catalyses the reaction glycodeoxycholate(out) = glycodeoxycholate(in). The enzyme catalyses glycochenodeoxycholate(out) = glycochenodeoxycholate(in). The catalysed reaction is glycoursodeoxycholate(out) = glycoursodeoxycholate(in). It carries out the reaction estrone 3-sulfate(out) = estrone 3-sulfate(in). It catalyses the reaction prostaglandin E2(out) = prostaglandin E2(in). The enzyme catalyses substance P(out) = substance P(in). Functionally, na(+)-independent transporter that mediates the cellular uptake of a broad range of organic anions such as the endogenous bile salts cholate and deoxycholate, either in their unconjugated or conjugated forms (taurocholate and glycocholate), estrone 3-sulfate and prostaglandin E2, at the plasma membrane. Responsible for intestinal absorption of bile acids. Capable of thyroid hormone transport (both T3 or 3,3',5'-triiodo-L-thyronine, and T4 or L-tyroxine). Plays roles in blood-brain and -cerebrospinal fluid barrier transport of organic anions and signal mediators, and in hormone uptake by neural cells. May also play a role in the reuptake of neuropeptides such as substance P/TAC1 and vasoactive intestinal peptide/VIP released from retinal neurons. Shows a pH-sensitive substrate specificity which may be ascribed to the protonation state of the binding site and leads to a stimulation of substrate transport in an acidic microenvironment. Hydrogencarbonate/HCO3(-) acts as the probable counteranion that exchanges for organic anions. May contribute to regulate the transport of organic compounds in testis across the blood-testis-barrier. The polypeptide is Solute carrier organic anion transporter family member 1A5 (Slco1a5) (Mus musculus (Mouse)).